We begin with the raw amino-acid sequence, 1328 residues long: Retrovirus-related Pol polyprotein from transposon TNT 1-94 (1328 aa).

The segment at 189-265 (PENQGQALIT…SGQKNDDNTA (77 aa)) is disordered. The span at 217–229 (ARGKSKNRSKSRV) shows a compositional bias: basic residues. A CCHC-type zinc finger spans residues 230–247 (RNCYNCNQPGHFKRDCPN). Over residues 241–253 (FKRDCPNPRKGKG) the composition is skewed to basic and acidic residues. Asp-297 acts as the For protease activity in catalysis. The Integrase catalytic domain maps to 473 to 642 (SSERKLNILD…IPERVWTNKE (170 aa)). Residues 729-742 (TIPSTSNNPTSAES) are compositionally biased toward polar residues. The tract at residues 729 to 800 (TIPSTSNNPT…RVESRRYPST (72 aa)) is disordered. Basic and acidic residues predominate over residues 770–798 (EVEHPTQGEEQHQPLRRSERPRVESRRYP).

It carries out the reaction DNA(n) + a 2'-deoxyribonucleoside 5'-triphosphate = DNA(n+1) + diphosphate. The protein is Retrovirus-related Pol polyprotein from transposon TNT 1-94 of Nicotiana tabacum (Common tobacco).